We begin with the raw amino-acid sequence, 148 residues long: UPF0178 protein lpg0089 (148 aa).

The protein belongs to the UPF0178 family.

The protein is UPF0178 protein lpg0089 of Legionella pneumophila subsp. pneumophila (strain Philadelphia 1 / ATCC 33152 / DSM 7513).